Here is a 96-residue protein sequence, read N- to C-terminus: uncharacterized protein (96 aa).

Residues 1–18 (MSNVDRYDVHRDGIEKDR) show a composition bias toward basic and acidic residues. Residues 1 to 96 (MSNVDRYDVH…REQHHQPQKQ (96 aa)) form a disordered region. Positions 28–46 (QNGQSQSTMDNRPPWNNDT) are enriched in polar residues. A compositionally biased stretch (basic and acidic residues) spans 70–96 (TIDRQQEELTKNWTESLREQHHQPQKQ).

This is an uncharacterized protein from Caenorhabditis elegans.